Consider the following 116-residue polypeptide: Distal membrane-arm assembly complex protein 1 (116 aa).

The disordered stretch occupies residues 1–39 (MGSRLSQPFESYITAPPGTAAAPAKPAPPATPGAPTSPA). A compositionally biased stretch (low complexity) spans 14 to 24 (TAPPGTAAAPA). A run of 2 helical transmembrane segments spans residues 52-69 (VLSG…YWVA) and 82-104 (WTIT…GIVV).

In terms of assembly, interacts with incompletely assembled mitochondrial NADH:ubiquinone oxidoreductase complex (complex I).

Its subcellular location is the mitochondrion inner membrane. Functionally, required for the assembly of the mitochondrial NADH:ubiquinone oxidoreductase complex (complex I). Involved in the assembly of the distal region of complex I. The protein is Distal membrane-arm assembly complex protein 1 of Homo sapiens (Human).